We begin with the raw amino-acid sequence, 302 residues long: Methionyl-tRNA formyltransferase (302 aa).

108-111 (SLLP) provides a ligand contact to (6S)-5,6,7,8-tetrahydrofolate. The segment covering 276 to 288 (REGKRPMEPEEFL) has biased composition (basic and acidic residues). A disordered region spans residues 276–302 (REGKRPMEPEEFLRGFPLPEGSRAHTA).

Belongs to the Fmt family.

It catalyses the reaction L-methionyl-tRNA(fMet) + (6R)-10-formyltetrahydrofolate = N-formyl-L-methionyl-tRNA(fMet) + (6S)-5,6,7,8-tetrahydrofolate + H(+). Attaches a formyl group to the free amino group of methionyl-tRNA(fMet). The formyl group appears to play a dual role in the initiator identity of N-formylmethionyl-tRNA by promoting its recognition by IF2 and preventing the misappropriation of this tRNA by the elongation apparatus. This Cereibacter sphaeroides (strain ATCC 17029 / ATH 2.4.9) (Rhodobacter sphaeroides) protein is Methionyl-tRNA formyltransferase.